The following is a 50-amino-acid chain: Ampulexin 2 (50 aa).

The first 26 residues, 1-26, serve as a signal peptide directing secretion; the sequence is MKAIMVLFYVMTLTIIGSFSMVSGSP.

As to quaternary structure, dimer; disulfide-linked. In terms of tissue distribution, expressed in venom sac and, to a lesser extent, in venom gland. Not expressed in brain.

Its subcellular location is the secreted. Amphipathic peptide which probably adopts an alpha-helical structure. Has no antimicrobial activity against E.coli DH5alpha or B.thuringiensis. Is not cytotoxic in vitro. This Ampulex compressa (Emerald cockroach wasp) protein is Ampulexin 2.